A 333-amino-acid chain; its full sequence is UDP-3-O-acylglucosamine N-acyltransferase (333 aa).

The active-site Proton acceptor is histidine 225.

Belongs to the transferase hexapeptide repeat family. LpxD subfamily. In terms of assembly, homotrimer.

It carries out the reaction a UDP-3-O-[(3R)-3-hydroxyacyl]-alpha-D-glucosamine + a (3R)-hydroxyacyl-[ACP] = a UDP-2-N,3-O-bis[(3R)-3-hydroxyacyl]-alpha-D-glucosamine + holo-[ACP] + H(+). It functions in the pathway bacterial outer membrane biogenesis; LPS lipid A biosynthesis. Catalyzes the N-acylation of UDP-3-O-acylglucosamine using 3-hydroxyacyl-ACP as the acyl donor. Is involved in the biosynthesis of lipid A, a phosphorylated glycolipid that anchors the lipopolysaccharide to the outer membrane of the cell. This chain is UDP-3-O-acylglucosamine N-acyltransferase, found in Paracidovorax citrulli (strain AAC00-1) (Acidovorax citrulli).